Reading from the N-terminus, the 140-residue chain is MSSVKDTMTTQVATVSPNQTIQEAASLMKQHNVGAIPVVEQGVLKGMLTDRDIALRTTAQGRDGQTPVSEVMSTELVSGNPNMSLEDASQLMAQHQIRRLPIVDQNNLVGIVALGDLAVNQMSNESAGSALTNISHQNIH.

2 consecutive CBS domains span residues 8 to 64 (MTTQ…GRDG) and 72 to 127 (MSTE…NESA).

This chain is CBS domain-containing protein YhcV (yhcV), found in Bacillus subtilis (strain 168).